A 601-amino-acid chain; its full sequence is ATP-dependent lipid A-core flippase (601 aa).

6 helical membrane passes run 35-55 (FAVAMVCMLIAGALTSSLAFL), 77-97 (LAIILIYLVKGGCSYFQAILM), 150-170 (AVTSLMKDSFTLICLVFVIFY), 173-193 (WQLAIIAMIVFPLTIYPIAKF), 263-283 (MEFLGGIGIAAIIFYGGYQVI), and 286-306 (SSTPGTFFSFLTALIMLYEPV). The 283-residue stretch at 36 to 318 (AVAMVCMLIA…LTNVNNTIQQ (283 aa)) folds into the ABC transmembrane type-1 domain. The ABC transporter domain occupies 352-585 (IEIRNISFAY…RGEYYKLHQL (234 aa)). Residue 384 to 391 (GMSGGGKT) coordinates ATP.

Belongs to the ABC transporter superfamily. Lipid exporter (TC 3.A.1.106) family. In terms of assembly, homodimer.

The protein localises to the cell inner membrane. The enzyme catalyses ATP + H2O + lipid A-core oligosaccharideSide 1 = ADP + phosphate + lipid A-core oligosaccharideSide 2.. Its function is as follows. Involved in lipopolysaccharide (LPS) biosynthesis. Translocates lipid A-core from the inner to the outer leaflet of the inner membrane. Transmembrane domains (TMD) form a pore in the inner membrane and the ATP-binding domain (NBD) is responsible for energy generation. This is ATP-dependent lipid A-core flippase from Syntrophus aciditrophicus (strain SB).